Consider the following 72-residue polypeptide: MTKKAKNVEKVPFEDAMKRLEEIIDLMNQPTTSLEASLALYEEADQLMRICESRIQEVEARIKQLSDQRSES.

This sequence belongs to the XseB family. In terms of assembly, heterooligomer composed of large and small subunits.

Its subcellular location is the cytoplasm. It carries out the reaction Exonucleolytic cleavage in either 5'- to 3'- or 3'- to 5'-direction to yield nucleoside 5'-phosphates.. In terms of biological role, bidirectionally degrades single-stranded DNA into large acid-insoluble oligonucleotides, which are then degraded further into small acid-soluble oligonucleotides. The chain is Exodeoxyribonuclease 7 small subunit from Chlamydia trachomatis serovar L2 (strain ATCC VR-902B / DSM 19102 / 434/Bu).